Reading from the N-terminus, the 457-residue chain is Argininosuccinate lyase (457 aa).

It belongs to the lyase 1 family. Argininosuccinate lyase subfamily.

The protein resides in the cytoplasm. It carries out the reaction 2-(N(omega)-L-arginino)succinate = fumarate + L-arginine. It functions in the pathway amino-acid biosynthesis; L-arginine biosynthesis; L-arginine from L-ornithine and carbamoyl phosphate: step 3/3. The chain is Argininosuccinate lyase from Escherichia coli O157:H7.